Reading from the N-terminus, the 2057-residue chain is Protein TIC 214 (2057 aa).

4 helical membrane-spanning segments follow: residues 13-33, 62-82, 158-178, and 206-226; these read KIIN…AFSI, LIMG…HIAL, LFVT…CEFF, and SDYF…HSFG. Residues 248 to 340 adopt a coiled-coil conformation; that stretch reads LILKGTDEEE…RVIQEKERKS (93 aa). Positions 288–302 are enriched in basic residues; that stretch reads NHLKKKKDRQKKQGT. Disordered regions lie at residues 288–316, 614–807, 890–910, 1597–1634, and 1724–1817; these read NHLK…NSNT, ETHT…EEKG, DEQT…NDRV, EEEE…TNND, and KKKN…KSLS. 2 stretches are compositionally biased toward basic and acidic residues: residues 621–657 and 665–702; these read ATDK…KETK and NTVD…KETK. The span at 704–713 shows a compositional bias: polar residues; it reads NASKETNTVN. Basic and acidic residues-rich tracts occupy residues 714–807 and 891–900; these read KETK…EEKG and EQTKREEKPK. Over residues 1597–1619 the composition is skewed to acidic residues; that stretch reads EEEEINPEEEINPEEEINPEEEI. Polar residues predominate over residues 1622 to 1634; it reads SSNQKTPIGTNND. Basic and acidic residues predominate over residues 1753-1817; it reads TNSEKKSKTN…ETDSEKKSLS (65 aa).

The protein belongs to the TIC214 family. In terms of assembly, part of the Tic complex.

The protein resides in the plastid. It localises to the chloroplast inner membrane. Involved in protein precursor import into chloroplasts. May be part of an intermediate translocation complex acting as a protein-conducting channel at the inner envelope. The protein is Protein TIC 214 of Ipomoea purpurea (Common morning glory).